The following is a 313-amino-acid chain: Probable F-box protein At3g44130 (313 aa).

Residues 1-46 enclose the F-box domain; it reads MASGNLPWELEEEILCRLPLGSLVRLRSVCKHWNDFFNDKWFIKKS.

The polypeptide is Probable F-box protein At3g44130 (Arabidopsis thaliana (Mouse-ear cress)).